Here is a 607-residue protein sequence, read N- to C-terminus: MNKKIIILIYLIFIKSIVGQNPVWIGGSGCNLFTDSSCWSPSTSPLTTDIVTMGVDSTQTVVDGDITITTLINNNLTLGGVEMSSTISLEIIDTSLIVSGAFSMATNSRLSLSLSDSYANSLVSGSATRNAVNVLMNLQSMQTLMVGSSFTMTGNSVLDVNRSISTINGVFTMNDDTSLFMYSKQNGDSKFTVGNSVLNDASSLNFQGQSFIFFNQTNLPSGLVLNDQSKIVAIDADNVKISGVVTLNDQSSIQLTSSRLYLDSLVTATTSSILVNNSTLSILQSIPTTFSPASAVFKGSVFTIKSNCTIQSPITMIDSVYSFNQSHTLASQFTGSNVYMIMDAAILNAGNYYDCSGCSLSMRNSIANFDSYENQGDLILSSSKLNSNAPITSNTGSIFGYYGELNQALTVESGSLGVYNEKTRLFVNGNVIVESGAKIQFYLSSPLDFSWLNTSGSLDVQSGTIIEIYVYIEILNNGSMEVIKTSNGFVTPLSTDNVKLYTYDPDNDVITDFSTTGGCEYSISITNTSVLVHTDYACQQAIITLGTDGISKGSLAGISVSMVALACFVSLGVWWKTSKKNDQRNDSQVLTNFSQNKSDDIDVERKL.

The first 19 residues, Met-1–Gly-19, serve as a signal peptide directing secretion. The Extracellular segment spans residues Gln-20–Ser-554. Asn-75, Asn-161, Asn-215, Asn-276, Asn-277, Asn-307, Asn-324, Asn-453, Asn-477, and Asn-527 each carry an N-linked (GlcNAc...) asparagine glycan. Residues Leu-555–Trp-575 form a helical membrane-spanning segment. Residues Lys-576 to Leu-607 lie on the Cytoplasmic side of the membrane.

As to quaternary structure, forms a complex with psiF/dicA.

The protein localises to the membrane. It is found in the secreted. Functionally, component of a complex that acts as a quorum sensing protein regulating discoidin gene expression during growth and development. Its function in the complex is unclear as it has no ability to induce discoidin during growth and development by itself. The protein is Discoidin-inducing complex subunit B (dicB) of Dictyostelium discoideum (Social amoeba).